A 242-amino-acid polypeptide reads, in one-letter code: Uridylate kinase (242 aa).

ATP contacts are provided by residues 15-18 (KISG), Gly-58, and Arg-62. Residues Asp-77 and 139–146 (TGNPFFTT) each bind UMP. Positions 166, 172, and 175 each coordinate ATP.

This sequence belongs to the UMP kinase family. In terms of assembly, homohexamer.

Its subcellular location is the cytoplasm. It catalyses the reaction UMP + ATP = UDP + ADP. It participates in pyrimidine metabolism; CTP biosynthesis via de novo pathway; UDP from UMP (UMPK route): step 1/1. Inhibited by UTP. Functionally, catalyzes the reversible phosphorylation of UMP to UDP. The protein is Uridylate kinase of Buchnera aphidicola subsp. Acyrthosiphon pisum (strain APS) (Acyrthosiphon pisum symbiotic bacterium).